We begin with the raw amino-acid sequence, 668 residues long: VLIGDPITTCLSPSVYDIICNLGFQLRENCDINSIVTQNGEVCWKTITDCVSYTESDQGLDYWGSVRLLGPVCEAVHSHFLSLTKGQFEIRYAPWFQWTSFPELFPEIFDALESLQSPAISLSLMKLTSCLERALGDVFLLIGKECPFLLRDLLASEELAQVFGQSVMNVLKVFVGSPCGLNLRNVLWHGFASPEEVPPKYCSMMMLLTAGLGQLLKSYLQKTKLTLAHRSFITPTNLEDLIVFPDVTYEVLSVLEEAMTKSAFILKIMLPYWEVALVKFKSHRFADCAILLLTQLETGLRNVFATLNRCPQRLLTAEILAKHLNDGKINQLPLFLGEPAMEFLWDFLNHQEGPRIRDHLSHGEINLHEFSKETTNQLLAFSVVLLLRFVDEGLLSVFKEKASVELLISLAEGYSSRCHPVFQLKKQVLSCEESIRVWALLPFPKELTWEAVRLEDNSETNACHSLITKMTDELYHHMPEDHCVLKDLDHLPTETWPQLLHELCSTPVRTLFCPRIVLEVLVVLRSIGKQCHRVSGQVTIASELRHRQWVERTLRSRQRQNYLRMWSSIRLLSPVLSLILFLITLELVNVHAVCGKNAHEYQQYLKFVKSILQYTENLVAYTSYEKNKWNETINLTHTVLLKIWTFSEKKQMLIHLAKKSTSKVLMKT.

2 helical membrane passes run 378–398 and 575–595; these read LLAFSVVLLLRFVDEGLLSVF and VLSLILFLITLELVNVHAVCG.

The protein resides in the endoplasmic reticulum membrane. Its function is as follows. May play a role in neuronal migration during embryonic development. This chain is Endoplasmic reticulum membrane-associated RNA degradation protein (ERMARD), found in Macaca fascicularis (Crab-eating macaque).